The sequence spans 568 residues: Peptidoglycan D,D-transpeptidase FtsI (568 aa).

A helical membrane pass occupies residues 19-39 (FVTLCSIVFLFLVILTLRIIF). Ser302 acts as the Acyl-ester intermediate in catalysis.

It belongs to the transpeptidase family. FtsI subfamily.

The protein localises to the cell inner membrane. It catalyses the reaction Preferential cleavage: (Ac)2-L-Lys-D-Ala-|-D-Ala. Also transpeptidation of peptidyl-alanyl moieties that are N-acyl substituents of D-alanine.. The protein operates within cell wall biogenesis; peptidoglycan biosynthesis. In terms of biological role, catalyzes cross-linking of the peptidoglycan cell wall at the division septum. This chain is Peptidoglycan D,D-transpeptidase FtsI, found in Buchnera aphidicola subsp. Schizaphis graminum (strain Sg).